The following is a 157-amino-acid chain: MATRTQAREAVIGMLYAYDLGNESIIEIARSMLEEKKIKNKQQDFAFSLLQGVIEHLSQIDLCIAPYLKEWEFSRLGGMERAMLRLGAFEILYTETDTPVIINEAVELGKMYGGEDNAPRFINGVLDALSKAHTKNKKSEDCSKTQDIINDALGKES.

The protein belongs to the NusB family.

Involved in transcription antitermination. Required for transcription of ribosomal RNA (rRNA) genes. Binds specifically to the boxA antiterminator sequence of the ribosomal RNA (rrn) operons. In Helicobacter hepaticus (strain ATCC 51449 / 3B1), this protein is Transcription antitermination protein NusB.